The primary structure comprises 378 residues: Alkanesulfonate monooxygenase (378 aa).

It belongs to the SsuD family.

It carries out the reaction an alkanesulfonate + FMNH2 + O2 = an aldehyde + FMN + sulfite + H2O + 2 H(+). In terms of biological role, catalyzes the desulfonation of aliphatic sulfonates. The polypeptide is Alkanesulfonate monooxygenase (Bacillus velezensis (strain DSM 23117 / BGSC 10A6 / LMG 26770 / FZB42) (Bacillus amyloliquefaciens subsp. plantarum)).